The sequence spans 869 residues: Sodium-dependent phosphate transporter (869 aa).

The Extracellular segment spans residues 1 to 18 (MEAVAELSAPSLAGAPGE). A helical membrane pass occupies residues 19–39 (YTWIVAVAGVTCFLTAFAIGA). Topologically, residues 40–54 (NDVANTFSSSVGSRA) are cytoplasmic. The helical transmembrane segment at 55-75 (IPLWAAIGMSAVLETVGATLL) threads the bilayer. Residues 76–97 (GGAVTDSIRSKIIDFEVFRETP) lie on the Extracellular side of the membrane. A helical transmembrane segment spans residues 98 to 118 (SILMTGMLCALVGAGLWLFLA). Residues 119–120 (NH) lie on the Cytoplasmic side of the membrane. Residues 121–141 (LGLPVSTTHSIIGALLGFGLA) traverse the membrane as a helical segment. Over 142–154 (SGNVRAVKWTQVA) the chain is Extracellular. Residues 155–175 (FIVGSWVAAPLAASAAGATIF) form a helical membrane-spanning segment. The Cytoplasmic portion of the chain corresponds to 176-196 (VCMRRLILRSRQPLRRAKRFL). Residues 197–217 (WIFIYLITLTFSVFLVFKNFF) traverse the membrane as a helical segment. Residues 218–250 (ELNVSCDQMVAGGRVEHFEPCRISRWADAHSGT) are Extracellular-facing. The helical transmembrane segment at 251-271 (ALGIAVALSVALTFVISCLVY) threads the bilayer. Residues 272–720 (RFAFYRVESY…SGSADSEIGS (449 aa)) are Cytoplasmic-facing. Disordered regions lie at residues 286–312 (KRSSRTEPRDASEEGTGPSHARPGGLL), 374–401 (AAAAKPDVGTAAQSPESRFAADPVGSSV), and 453–571 (SAFL…KRER). Positions 457-481 (SSPSSSVPPSSPSPSSTPSSPSASP) are enriched in low complexity. Over residues 482 to 491 (RRPPSRPPVP) the composition is skewed to pro residues. A compositionally biased stretch (low complexity) spans 492-509 (RTCSPAPVSPSVPRAFAS). Residues 556–571 (PHPERRDEVPAAKRER) are compositionally biased toward basic and acidic residues. A helical transmembrane segment spans residues 721-741 (PWYILLFGGLSMSLGLALLGY). The Extracellular portion of the chain corresponds to 742–759 (RVIKTVGVKLVKITPARG). A helical membrane pass occupies residues 760 to 780 (FSMELGAAWTVLIFSAIGIPL). Residues 781–837 (STTHCAVGSTVGVGLMEPKHPRRETGDGPVAEGEEPKKRAVQCPVINTASVNWKLFG) lie on the Cytoplasmic side of the membrane. The helical transmembrane segment at 838–858 (GVFVSWIITIAFSALVTAALF) threads the bilayer. Residues 859–869 (SFAAYSPRMVS) are Extracellular-facing.

This sequence belongs to the inorganic phosphate transporter (PiT) (TC 2.A.20) family.

Its subcellular location is the cell membrane. It localises to the vacuole membrane. The protein localises to the cytoplasmic vesicle membrane. It catalyses the reaction 2 Na(+)(out) + phosphate(out) = 2 Na(+)(in) + phosphate(in). Its function is as follows. Sodium-phosphate symporter which preferentially transports the monovalent form of phosphate with a stoichiometry of two sodium ions per phosphate ion. Plays a role in stabilizing the cytosolic pH and osmoregulation. May be required for optimal virulence of parasites in vivo. The chain is Sodium-dependent phosphate transporter from Toxoplasma gondii (strain ATCC 50861 / VEG).